A 254-amino-acid chain; its full sequence is Triosephosphate isomerase (254 aa).

A substrate-binding site is contributed by 9 to 11 (NWK). The active-site Electrophile is the His96. Glu169 functions as the Proton acceptor in the catalytic mechanism. Substrate contacts are provided by residues Gly175, Ser215, and 236-237 (GG).

The protein belongs to the triosephosphate isomerase family. As to quaternary structure, homodimer.

It localises to the cytoplasm. It catalyses the reaction D-glyceraldehyde 3-phosphate = dihydroxyacetone phosphate. It participates in carbohydrate biosynthesis; gluconeogenesis. It functions in the pathway carbohydrate degradation; glycolysis; D-glyceraldehyde 3-phosphate from glycerone phosphate: step 1/1. Functionally, involved in the gluconeogenesis. Catalyzes stereospecifically the conversion of dihydroxyacetone phosphate (DHAP) to D-glyceraldehyde-3-phosphate (G3P). This chain is Triosephosphate isomerase, found in Borrelia hermsii (strain HS1 / DAH).